A 220-amino-acid chain; its full sequence is tRNA (guanine-N(7)-)-methyltransferase (220 aa).

The S-adenosyl-L-methionine site is built by Glu-44, Glu-69, Asn-96, and Asp-118. Asp-118 is a catalytic residue. Lys-122 is a substrate binding site. The segment at 124-129 is interaction with RNA; it reads RHEKRR. Residues Asp-154 and 191-194 contribute to the substrate site; that span reads TEYE.

It belongs to the class I-like SAM-binding methyltransferase superfamily. TrmB family.

It carries out the reaction guanosine(46) in tRNA + S-adenosyl-L-methionine = N(7)-methylguanosine(46) in tRNA + S-adenosyl-L-homocysteine. Its pathway is tRNA modification; N(7)-methylguanine-tRNA biosynthesis. Functionally, catalyzes the formation of N(7)-methylguanine at position 46 (m7G46) in tRNA. The polypeptide is tRNA (guanine-N(7)-)-methyltransferase (Geobacillus sp. (strain WCH70)).